Here is a 93-residue protein sequence, read N- to C-terminus: Small ribosomal subunit protein uS19 (93 aa).

This sequence belongs to the universal ribosomal protein uS19 family.

Protein S19 forms a complex with S13 that binds strongly to the 16S ribosomal RNA. This Ehrlichia canis (strain Jake) protein is Small ribosomal subunit protein uS19.